Consider the following 31-residue polypeptide: Cytochrome b6-f complex subunit 6 (31 aa).

A helical transmembrane segment spans residues 4-26 (ITSYFGFLLAASTITPALLIGLN).

Belongs to the PetL family. In terms of assembly, the 4 large subunits of the cytochrome b6-f complex are cytochrome b6, subunit IV (17 kDa polypeptide, PetD), cytochrome f and the Rieske protein, while the 4 small subunits are PetG, PetL, PetM and PetN. The complex functions as a dimer.

It localises to the plastid. The protein localises to the chloroplast thylakoid membrane. In terms of biological role, component of the cytochrome b6-f complex, which mediates electron transfer between photosystem II (PSII) and photosystem I (PSI), cyclic electron flow around PSI, and state transitions. PetL is important for photoautotrophic growth as well as for electron transfer efficiency and stability of the cytochrome b6-f complex. This chain is Cytochrome b6-f complex subunit 6, found in Calycanthus floridus var. glaucus (Eastern sweetshrub).